A 1128-amino-acid polypeptide reads, in one-letter code: Transient receptor potential-gamma protein (1128 aa).

The Cytoplasmic portion of the chain corresponds to 1-325 (MMEEENTIRP…MALQAVDIIR (325 aa)). 2 ANK repeats span residues 57 to 86 (LGRT…DTKD) and 131 to 160 (PDIT…VLPM). Residues 326 to 346 (IGIMFPIFSLAYILAPYSSIG) traverse the membrane as a helical segment. Topologically, residues 347 to 403 (QTMRKPFIKFICHSASYFTFLFLLMLASQRIETFIGGWFFADSSGMLNTMEELPTKR) are extracellular. The chain crosses the membrane as a helical span at residues 404–424 (GAKPTFIEWLILAWVSGLIWS). Topologically, residues 425–444 (EVKQLWDVGLQEYLNDMWNV) are cytoplasmic. A helical transmembrane segment spans residues 445 to 465 (IDFVTNSLYVATVALRVVSFF). Residues 466-492 (QVQKEMIYNSHATDLPRERWDAWDPML) are Extracellular-facing. Residues 493–513 (ISEGLFSAANIFSSLKLVYIF) form a helical membrane-spanning segment. Residues 514–535 (SVNPHLGPLQVSLSRMVMDIMK) lie on the Cytoplasmic side of the membrane. The helical transmembrane segment at 536–556 (FFFLYVLVLFAFGSGLNQLLW) threads the bilayer. Topologically, residues 557 to 629 (YYADLEKKRC…GIKIFTRFWG (73 aa)) are extracellular. Residues 630-650 (MLMFGTYSVINIVVLLNLLIA) traverse the membrane as a helical segment. Topologically, residues 651 to 1128 (MMNHSYQLIS…SCVSTTGAIG (478 aa)) are cytoplasmic. Disordered stretches follow at residues 865–898 (RQQS…TASS) and 1064–1111 (AAEA…SVNS). Residues 878–893 (ESPTTPTAPQGTQGAA) are compositionally biased toward low complexity. The segment covering 1085–1111 (TQSQHDSVETNSTFTLSIDPSNTSVNS) has biased composition (polar residues).

Belongs to the transient receptor (TC 1.A.4) family. STrpC subfamily. As to quaternary structure, interacts preferentially with trpl and interacts to a lower extent with trp. In terms of tissue distribution, expressed predominantly in the rhabdomeres of photoreceptor cells.

It is found in the cell projection. The protein localises to the rhabdomere membrane. In terms of biological role, a light-sensitive calcium channel that is required for inositide-mediated Ca(2+) entry in the retina during phospholipase C (PLC)-mediated phototransduction. Forms a regulated cation channel when heteromultimerized with trpl. This is Transient receptor potential-gamma protein (Trpgamma) from Drosophila melanogaster (Fruit fly).